Here is a 486-residue protein sequence, read N- to C-terminus: Chromosomal replication initiator protein DnaA (486 aa).

The domain I, interacts with DnaA modulators stretch occupies residues 1–79; that stretch reads MEKSKNIWSL…GYNNIVIVFT (79 aa). The tract at residues 79 to 141 is domain II; that stretch reads TNQPPKTHSN…EEEPTNFKNP (63 aa). Residues 142–358 are domain III, AAA+ region; that stretch reads FLKKRYTFEN…AAVTKLKAYI (217 aa). Residues glycine 186, glycine 188, lysine 189, and threonine 190 each contribute to the ATP site. Positions 359-486 are domain IV, binds dsDNA; that stretch reads DLDNIEIDIE…TELMNKIKKN (128 aa).

It belongs to the DnaA family. In terms of assembly, oligomerizes as a right-handed, spiral filament on DNA at oriC.

Its subcellular location is the cytoplasm. Functionally, plays an essential role in the initiation and regulation of chromosomal replication. ATP-DnaA binds to the origin of replication (oriC) to initiate formation of the DNA replication initiation complex once per cell cycle. Binds the DnaA box (a 9 base pair repeat at the origin) and separates the double-stranded (ds)DNA. Forms a right-handed helical filament on oriC DNA; dsDNA binds to the exterior of the filament while single-stranded (ss)DNA is stabiized in the filament's interior. The ATP-DnaA-oriC complex binds and stabilizes one strand of the AT-rich DNA unwinding element (DUE), permitting loading of DNA polymerase. After initiation quickly degrades to an ADP-DnaA complex that is not apt for DNA replication. Binds acidic phospholipids. Binds to the bpuR promoter, possibly at 5'-TTTTTAAA-3'. This Borreliella burgdorferi (strain ATCC 35210 / DSM 4680 / CIP 102532 / B31) (Borrelia burgdorferi) protein is Chromosomal replication initiator protein DnaA.